The chain runs to 167 residues: Protein FimG (167 aa).

Residues 1–23 (MKWCKRGYVLAAILALASATIQA) form the signal peptide. Cysteine 39 and cysteine 77 are oxidised to a cystine.

Belongs to the fimbrial protein family.

The protein localises to the fimbrium. In terms of biological role, involved in regulation of length and mediation of adhesion of type 1 fimbriae (but not necessary for the production of fimbriae). Involved in the integration of FimH in the fimbriae. This is Protein FimG (fimG) from Escherichia coli (strain K12).